Consider the following 221-residue polypeptide: Large ribosomal subunit protein uL4 (221 aa).

Residues 46–74 form a disordered region; it reads AGTASTKTRSEVSGGGRKPWPQKHTGRAR.

It belongs to the universal ribosomal protein uL4 family. In terms of assembly, part of the 50S ribosomal subunit.

In terms of biological role, one of the primary rRNA binding proteins, this protein initially binds near the 5'-end of the 23S rRNA. It is important during the early stages of 50S assembly. It makes multiple contacts with different domains of the 23S rRNA in the assembled 50S subunit and ribosome. Its function is as follows. Forms part of the polypeptide exit tunnel. The chain is Large ribosomal subunit protein uL4 from Petrotoga mobilis (strain DSM 10674 / SJ95).